The chain runs to 520 residues: Cytochrome P450 monooxygenase oblB (520 aa).

3 helical membrane passes run 17-37, 229-249, and 320-340; these read VAVI…RLFL, LFMG…SILA, and IGTG…HIVV. C462 serves as a coordination point for heme.

The protein belongs to the cytochrome P450 family. Requires heme as cofactor.

Its subcellular location is the membrane. The protein operates within secondary metabolite biosynthesis; terpenoid biosynthesis. Functionally, cytochrome P450 monooxygenase; part of the gene cluster that mediates the biosynthesis of the sesterterpenes ophiobolins, fungal phytotoxins with potential anti-cancer activities. The first step of the pathway is performed by the sesterterpene synthase oblA that possesses both prenyl transferase and terpene cyclase activity, converting isopentenyl diphosphate and dimethylallyl diphosphate into geranylfarnesyl diphosphate (GFPP) and further converting GFPP into ophiobolin F, respectively. Other sesterterpenoids (C(25) terpenoids) are found as minor products of oblA. It is expected that ophiobolin F is then oxidized to ophiobolin A via ophiobolin C and ophiobolin B intermediates by the combined action of the cytochrome P450 monooxygenase oblB and the FAD-dependent oxidoreductase oblC. Although oblB catalyzes multistep oxygenations at C5 and C21/C7 in a relatively efficient manner, it is unable to convert ophiobolin F to ophiobolin C and produces instead several unexpected derivatives. The protein is Cytochrome P450 monooxygenase oblB of Aspergillus clavatus (strain ATCC 1007 / CBS 513.65 / DSM 816 / NCTC 3887 / NRRL 1 / QM 1276 / 107).